A 293-amino-acid polypeptide reads, in one-letter code: Ribosomal RNA small subunit methyltransferase A (293 aa).

S-adenosyl-L-methionine-binding residues include Asn-33, Val-35, Gly-60, Glu-81, Asp-111, and Asn-130.

The protein belongs to the class I-like SAM-binding methyltransferase superfamily. rRNA adenine N(6)-methyltransferase family. RsmA subfamily.

The protein resides in the cytoplasm. It carries out the reaction adenosine(1518)/adenosine(1519) in 16S rRNA + 4 S-adenosyl-L-methionine = N(6)-dimethyladenosine(1518)/N(6)-dimethyladenosine(1519) in 16S rRNA + 4 S-adenosyl-L-homocysteine + 4 H(+). Specifically dimethylates two adjacent adenosines (A1518 and A1519) in the loop of a conserved hairpin near the 3'-end of 16S rRNA in the 30S particle. May play a critical role in biogenesis of 30S subunits. The sequence is that of Ribosomal RNA small subunit methyltransferase A from Corynebacterium glutamicum (strain R).